The chain runs to 1413 residues: Zinc finger SWIM domain-containing protein 8 (1413 aa).

A phosphoserine mark is found at serine 36, serine 48, and serine 53. Residues 45 to 65 (RKQSAGPNSPTGGGGGGGSGG) are disordered. Positions 55–65 (TGGGGGGGSGG) are enriched in gly residues. The SWIM-type zinc-finger motif lies at 172–208 (YNVAVMFDRCRVTSCSCTCGAGAKWCTHVVALCLFRI). A disordered region spans residues 600-817 (ESQTHKPQTL…ESHAPHVPNQ (218 aa)). Positions 604–625 (HKPQTLSSFYSSSRPATASQRS) are enriched in polar residues. A compositionally biased stretch (gly residues) spans 704–715 (SRGGYNGRGWGS). At threonine 724 the chain carries Phosphothreonine. A compositionally biased stretch (polar residues) spans 729-744 (IDSSAPETTSDSSPTL). 3 positions are modified to phosphoserine: serine 738, serine 741, and serine 745. Low complexity predominate over residues 759–794 (GRGQDSDSISSSSSDSLGSSSSSGSRRASASGGARA). A compositionally biased stretch (basic and acidic residues) spans 795-811 (KTVEVGRYKGRRPESHA). Phosphoserine occurs at positions 852 and 1412.

It belongs to the ZSWIM8 family. Component of the SCF-like E3 ubiquitin-protein ligase complex which contains CUL3, RBX1, ELOB, ELOC and ZSWIM8. Interacts with DAB1.

The protein resides in the cytoplasm. It is found in the cytosol. Its pathway is protein modification; protein ubiquitination. In terms of biological role, substrate recognition component of a SCF-like E3 ubiquitin-protein ligase complex that promotes target-directed microRNA degradation (TDMD), a process that mediates degradation of microRNAs (miRNAs). The SCF-like E3 ubiquitin-protein ligase complex acts by catalyzing ubiquitination and subsequent degradation of AGO proteins (AGO1, AGO2, AGO3 and/or AGO4), thereby exposing miRNAs for degradation. Specifically recognizes and binds AGO proteins when they are engaged with a TDMD target. May also acts as a regulator of axon guidance: specifically recognizes misfolded ROBO3 and promotes its ubiquitination and subsequent degradation. Plays an essential role for proper embryonic development of heart and lung. Controls protein quality of DAB1, a key signal molecule for brain development, thus protecting its signaling strength. Mechanistically, recognizes intrinsically disordered regions of DAB1 and eliminates misfolded DAB1 that cannot be properly phosphorylated. The sequence is that of Zinc finger SWIM domain-containing protein 8 from Bos taurus (Bovine).